The primary structure comprises 142 residues: SPbeta prophage-derived deoxyuridine 5'-triphosphate nucleotidohydrolase YosS (142 aa).

Residues S62 and N74 each contribute to the dUMP site. The active-site Proton acceptor is the D80. Residues Y83 and F91 each coordinate dUMP.

It belongs to the dUTPase family. In terms of assembly, homotrimer. It depends on Mg(2+) as a cofactor.

It catalyses the reaction dUTP + H2O = dUMP + diphosphate + H(+). The protein operates within pyrimidine metabolism; dUMP biosynthesis; dUMP from dCTP (dUTP route): step 2/2. In terms of biological role, involved in nucleotide metabolism: produces dUMP, the immediate precursor of thymidine nucleotides and decreases the intracellular concentration of dUTP, so that uracil cannot be incorporated into DNA. The Ser-62 side chain changes its position upon ligand-binding to make contacts with the nucleotide phosphates. This Bacillus subtilis (strain 168) protein is SPbeta prophage-derived deoxyuridine 5'-triphosphate nucleotidohydrolase YosS.